Reading from the N-terminus, the 314-residue chain is MSEAALDLAPDAGAAAPPSWETIAPPAPGELLVVVGPTASGKTELAIRLAERFGGEVVSADSVQIYREFDLGSGKPTPAERARAAHHLVDAVDPLQAIDAQRFAELAEAAIDDIRGRGRVPVVCGGTFLWVKALVLGLSPAPPADPEARARHRAIADAEGRAALHARLAAVDPESAARLAPNDLVRVSRALEIYERSGRTQSAWHAEHGFRERRHAARLLAVHRDRAELDHRIEARVAGWLEQGWVDEVRSLLSRGYGDARAMGSVGYRQVREHLEGRLPADELAPAIVRATRTFVRRQRTWLRDQAVAYVALP.

Position 36–43 (36–43) interacts with ATP; it reads GPTASGKT. 38-43 contacts substrate; it reads TASGKT. The segment at 61-64 is interaction with substrate tRNA; the sequence is DSVQ.

It belongs to the IPP transferase family. As to quaternary structure, monomer. Requires Mg(2+) as cofactor.

The enzyme catalyses adenosine(37) in tRNA + dimethylallyl diphosphate = N(6)-dimethylallyladenosine(37) in tRNA + diphosphate. Functionally, catalyzes the transfer of a dimethylallyl group onto the adenine at position 37 in tRNAs that read codons beginning with uridine, leading to the formation of N6-(dimethylallyl)adenosine (i(6)A). This Sorangium cellulosum (strain So ce56) (Polyangium cellulosum (strain So ce56)) protein is tRNA dimethylallyltransferase.